Reading from the N-terminus, the 181-residue chain is Acireductone dioxygenase (181 aa).

Fe(2+)-binding residues include histidine 98, histidine 100, glutamate 104, and histidine 142. Ni(2+) is bound by residues histidine 98, histidine 100, glutamate 104, and histidine 142.

It belongs to the acireductone dioxygenase (ARD) family. Monomer. The cofactor is Fe(2+). Ni(2+) serves as cofactor.

It carries out the reaction 1,2-dihydroxy-5-(methylsulfanyl)pent-1-en-3-one + O2 = 3-(methylsulfanyl)propanoate + CO + formate + 2 H(+). The enzyme catalyses 1,2-dihydroxy-5-(methylsulfanyl)pent-1-en-3-one + O2 = 4-methylsulfanyl-2-oxobutanoate + formate + 2 H(+). It functions in the pathway amino-acid biosynthesis; L-methionine biosynthesis via salvage pathway; L-methionine from S-methyl-5-thio-alpha-D-ribose 1-phosphate: step 5/6. Catalyzes 2 different reactions between oxygen and the acireductone 1,2-dihydroxy-3-keto-5-methylthiopentene (DHK-MTPene) depending upon the metal bound in the active site. Fe-containing acireductone dioxygenase (Fe-ARD) produces formate and 2-keto-4-methylthiobutyrate (KMTB), the alpha-ketoacid precursor of methionine in the methionine recycle pathway. Ni-containing acireductone dioxygenase (Ni-ARD) produces methylthiopropionate, carbon monoxide and formate, and does not lie on the methionine recycle pathway. In Synechococcus sp. (strain ATCC 27144 / PCC 6301 / SAUG 1402/1) (Anacystis nidulans), this protein is Acireductone dioxygenase.